Consider the following 294-residue polypeptide: Probable 2-(5''-triphosphoribosyl)-3'-dephosphocoenzyme-A synthase (294 aa).

The protein belongs to the CitG/MdcB family.

It catalyses the reaction 3'-dephospho-CoA + ATP = 2'-(5''-triphospho-alpha-D-ribosyl)-3'-dephospho-CoA + adenine. The protein is Probable 2-(5''-triphosphoribosyl)-3'-dephosphocoenzyme-A synthase of Streptococcus equi subsp. zooepidemicus (strain MGCS10565).